Reading from the N-terminus, the 170-residue chain is Large ribosomal subunit protein bL17 (170 aa).

The protein belongs to the bacterial ribosomal protein bL17 family. Part of the 50S ribosomal subunit. Contacts protein L32.

The sequence is that of Large ribosomal subunit protein bL17 from Azobacteroides pseudotrichonymphae genomovar. CFP2.